We begin with the raw amino-acid sequence, 515 residues long: MPKERRSRRRPQPIIRWVSLTLTLLSLCQPIQTWRCSLSLGNQQWMTTYNQEAKFSIAIDQILEAHNQSPFCPRSPRYTLDFVNGYPKIYWPPPQGRRRFGARAMVTYDCEPRCPYVGADHFDCPHWDNASQADQGSFYVNHQILFLHLKQCHGIFTLTWEIWGYDPLITFSLHKIPDPPQPDFPQLNSDWVPSVRSWALLLNQTARAFPDCAICWEPSPPWAPEILVYNKTISNSGPGLALPDAQIFWVNTSLFNTTQGWHHPSQRLLFNVSQGNALLLPPISLVNLSTASSAPPTRVRRSPAAALTLGLALSVGLTGINVAVSALSHQRLTSLIHVLEQDQQRLITAINQTHYNLLNVASVVAQNRRGLDWLYIRLGFQSLCPTINEPCCFLRIQNDSIIRLGDLQPLSQRVSTDWQWPWNWDLGLTAWVRETIHSVLSLFLLALFLLFLAPCLIKCLTSRLLKLLRQAPHFPEISLAPKPDSDYQALLPSAPEIYSHLSPTKPDYINLRPCP.

Residues 1–33 (MPKERRSRRRPQPIIRWVSLTLTLLSLCQPIQT) form the signal peptide. Residues 34–435 (WRCSLSLGNQ…LGLTAWVRET (402 aa)) are Extracellular-facing. N129 and N203 each carry an N-linked (GlcNAc...) asparagine; by host glycan. A CXXC motif is present at residues 212–215 (CAIC). Disulfide bonds link C212-C215, C212-C392, and C384-C391. 5 N-linked (GlcNAc...) asparagine; by host glycosylation sites follow: N230, N251, N256, N271, and N287. A fusion peptide region spans residues 304 to 324 (AAALTLGLALSVGLTGINVAV). 2 coiled-coil regions span residues 330–376 (QRLT…WLYI) and 388–420 (NEPCCFLRIQNDSIIRLGDLQPLSQRVSTDWQW). Residue N351 is glycosylated (N-linked (GlcNAc...) asparagine; by host). Positions 365–381 (AQNRRGLDWLYIRLGFQ) are immunosuppression. Residues 384–392 (CPTINEPCC) carry the CX6CC motif. An N-linked (GlcNAc...) asparagine; by host glycan is attached at N398. A helical membrane pass occupies residues 436-456 (IHSVLSLFLLALFLLFLAPCL). Residue C455 is the site of S-palmitoyl cysteine; by host attachment. Residues 457–515 (IKCLTSRLLKLLRQAPHFPEISLAPKPDSDYQALLPSAPEIYSHLSPTKPDYINLRPCP) are Cytoplasmic-facing.

As to quaternary structure, the mature envelope protein (Env) consists of a trimer of SU-TM heterodimers attached by a labile interchain disulfide bond. Specific enzymatic cleavages in vivo yield mature proteins. Envelope glycoproteins are synthesized as an inactive precursor that is N-glycosylated and processed likely by host cell furin or by a furin-like protease in the Golgi to yield the mature SU and TM proteins. The cleavage site between SU and TM requires the minimal sequence [KR]-X-[KR]-R. Post-translationally, the CXXC motif is highly conserved across a broad range of retroviral envelope proteins. It is thought to participate in the formation of a labile disulfide bond possibly with the CX6CC motif present in the transmembrane protein. Isomerization of the intersubunit disulfide bond to an SU intrachain disulfide bond is thought to occur upon receptor recognition in order to allow membrane fusion. In terms of processing, the transmembrane protein is palmitoylated.

The protein resides in the virion membrane. Its subcellular location is the host cell membrane. Functionally, the surface protein (SU) attaches the virus to the host cell by binding to its receptor. This interaction triggers the refolding of the transmembrane protein (TM) and is thought to activate its fusogenic potential by unmasking its fusion peptide. Fusion occurs at the host cell plasma membrane. In terms of biological role, the transmembrane protein (TM) acts as a class I viral fusion protein. Under the current model, the protein has at least 3 conformational states: pre-fusion native state, pre-hairpin intermediate state, and post-fusion hairpin state. During viral and target cell membrane fusion, the coiled coil regions (heptad repeats) assume a trimer-of-hairpins structure, positioning the fusion peptide in close proximity to the C-terminal region of the ectodomain. The formation of this structure appears to drive apposition and subsequent fusion of viral and target cell membranes. Membranes fusion leads to delivery of the nucleocapsid into the cytoplasm. In Bovine leukemia virus (isolate Belgium LB285) (BLV), this protein is Envelope glycoprotein (env).